Consider the following 390-residue polypeptide: Digeranylgeranylglycerophospholipid reductase (390 aa).

A18, E37, C48, A49, A51, R98, V122, D278, G290, and I291 together coordinate FAD. V368 lines the a 2,3-bis-O-(geranylgeranyl)-sn-glycerol 1-phospholipid pocket.

The protein belongs to the geranylgeranyl reductase family. DGGGPL reductase subfamily. FAD serves as cofactor.

It carries out the reaction a 2,3-bis-O-phytanyl-sn-glycerol 1-phospholipid + 8 A = a 2,3-bis-O-(geranylgeranyl)-sn-glycerol 1-phospholipid + 8 AH2. It catalyses the reaction 2,3-bis-O-(phytanyl)-sn-glycerol 1-phosphate + 8 A = 2,3-bis-O-(geranylgeranyl)-sn-glycerol 1-phosphate + 8 AH2. The enzyme catalyses CDP-2,3-bis-O-(geranylgeranyl)-sn-glycerol + 8 AH2 = CDP-2,3-bis-O-(phytanyl)-sn-glycerol + 8 A. The catalysed reaction is archaetidylserine + 8 AH2 = 2,3-bis-O-phytanyl-sn-glycero-3-phospho-L-serine + 8 A. The protein operates within membrane lipid metabolism; glycerophospholipid metabolism. Functionally, is involved in the reduction of 2,3-digeranylgeranylglycerophospholipids (unsaturated archaeols) into 2,3-diphytanylglycerophospholipids (saturated archaeols) in the biosynthesis of archaeal membrane lipids. Catalyzes the formation of archaetidic acid (2,3-di-O-phytanyl-sn-glyceryl phosphate) from 2,3-di-O-geranylgeranylglyceryl phosphate (DGGGP) via the hydrogenation of each double bond of the isoprenoid chains. Is also probably able to reduce double bonds of geranyl groups in CDP-2,3-bis-O-(geranylgeranyl)-sn-glycerol and archaetidylserine, thus acting at various stages in the biosynthesis of archaeal membrane lipids. In Methanococcus vannielii (strain ATCC 35089 / DSM 1224 / JCM 13029 / OCM 148 / SB), this protein is Digeranylgeranylglycerophospholipid reductase.